A 275-amino-acid polypeptide reads, in one-letter code: Phosphate import ATP-binding protein PstB (275 aa).

An ABC transporter domain is found at 28 to 270 (MSAKNVSVFY…PREERTKDYI (243 aa)). 60–67 (GPSGCGKS) lines the ATP pocket.

This sequence belongs to the ABC transporter superfamily. Phosphate importer (TC 3.A.1.7) family. As to quaternary structure, the complex is composed of two ATP-binding proteins (PstB), two transmembrane proteins (PstC and PstA) and a solute-binding protein (PstS).

Its subcellular location is the cell inner membrane. It catalyses the reaction phosphate(out) + ATP + H2O = ADP + 2 phosphate(in) + H(+). In terms of biological role, part of the ABC transporter complex PstSACB involved in phosphate import. Responsible for energy coupling to the transport system. In Novosphingobium aromaticivorans (strain ATCC 700278 / DSM 12444 / CCUG 56034 / CIP 105152 / NBRC 16084 / F199), this protein is Phosphate import ATP-binding protein PstB.